The sequence spans 782 residues: Calcium-independent phospholipase A2-gamma (782 aa).

The N-linked (GlcNAc...) asparagine glycan is linked to asparagine 4. Disordered stretches follow at residues glutamate 219–isoleucine 275 and serine 317–lysine 343. Residues lysine 220 to serine 248 show a composition bias toward basic and acidic residues. Asparagine 361 carries an N-linked (GlcNAc...) asparagine glycan. The PNPLA domain occupies leucine 445 to methionine 640. A GXGXXG motif is present at residues glycine 449 to glycine 454. The helical transmembrane segment at leucine 475 to phenylalanine 495 threads the bilayer. Positions glycine 481–glycine 485 match the GXSXG motif. Serine 483 serves as the catalytic Nucleophile. The Proton acceptor role is filled by aspartate 627. Residues aspartate 627–glycine 629 carry the DGA/G motif. Lysine 736 bears the N6-succinyllysine mark.

As to expression, expressed in parenchymal tissues including heart, skeletal muscle, placenta, brain, liver and pancreas. Also expressed in bronchial epithelial cells and kidney. Highest expression is observed in skeletal muscle and heart.

It localises to the endoplasmic reticulum membrane. The protein resides in the mitochondrion membrane. It is found in the peroxisome membrane. It carries out the reaction a 1,2-diacyl-sn-glycero-3-phosphocholine + H2O = a 1-acyl-sn-glycero-3-phosphocholine + a fatty acid + H(+). The catalysed reaction is a 1,2-diacyl-sn-glycero-3-phosphocholine + H2O = a 2-acyl-sn-glycero-3-phosphocholine + a fatty acid + H(+). It catalyses the reaction a 1,2-diacyl-sn-glycero-3-phosphoethanolamine + H2O = a 1-acyl-sn-glycero-3-phosphoethanolamine + a fatty acid + H(+). The enzyme catalyses a 1-O-(1Z-alkenyl)-2-acyl-sn-glycero-3-phosphocholine + H2O = a 1-O-(1Z-alkenyl)-sn-glycero-3-phosphocholine + a fatty acid + H(+). It carries out the reaction a 1-acyl-sn-glycero-3-phosphocholine + H2O = sn-glycerol 3-phosphocholine + a fatty acid + H(+). The catalysed reaction is 1-acyl-2-(9Z,12Z)-octadecadienoyl-sn-glycero-3-phosphocholine + H2O = a 1-acyl-sn-glycero-3-phosphocholine + (9Z,12Z)-octadecadienoate + H(+). It catalyses the reaction 1-acyl-2-(5Z,8Z,11Z,14Z-eicosatetraenoyl)-sn-glycero-3-phosphocholine + H2O = a 1-acyl-sn-glycero-3-phosphocholine + (5Z,8Z,11Z,14Z)-eicosatetraenoate + H(+). The enzyme catalyses 1-hexadecanoyl-2-(5Z,8Z,11Z,14Z-eicosatetraenoyl)-sn-glycero-3-phosphocholine + H2O = 1-hexadecanoyl-sn-glycero-3-phosphocholine + (5Z,8Z,11Z,14Z)-eicosatetraenoate + H(+). It carries out the reaction 1-octadecanoyl-2-(9Z-octadecenoyl)-sn-glycero-3-phosphocholine + H2O = 1-octadecanoyl-sn-glycero-3-phosphocholine + (9Z)-octadecenoate + H(+). The catalysed reaction is 1-hexadecanoyl-2-(9Z-octadecenoyl)-sn-glycero-3-phosphocholine + H2O = 1-hexadecanoyl-sn-glycero-3-phosphocholine + (9Z)-octadecenoate + H(+). It catalyses the reaction 1-hexadecanoyl-2-(9Z,12Z-octadecadienoyl)-sn-glycero-3-phosphocholine + H2O = (9Z,12Z)-octadecadienoate + 1-hexadecanoyl-sn-glycero-3-phosphocholine + H(+). The enzyme catalyses 1-acyl-2-(9Z,12Z)-octadecadienoyl-sn-glycero-3-phosphoethanolamine + H2O = a 1-acyl-sn-glycero-3-phosphoethanolamine + (9Z,12Z)-octadecadienoate + H(+). It carries out the reaction 1-acyl-2-(5Z,8Z,11Z,14Z)-eicosatetraenoyl-sn-glycero-3-phosphoethanolamine + H2O = a 1-acyl-sn-glycero-3-phosphoethanolamine + (5Z,8Z,11Z,14Z)-eicosatetraenoate + H(+). The catalysed reaction is 1-hexadecanoyl-2-(5Z,8Z,11Z,14Z-eicosatetraenoyl)-sn-glycero-3-phosphoethanolamine + H2O = 1-hexadecanoyl-sn-glycero-3-phosphoethanolamine + (5Z,8Z,11Z,14Z)-eicosatetraenoate + H(+). It catalyses the reaction 1-hexadecanoyl-2-(5Z,8Z,11Z,14Z-eicosatetraenoyl)-sn-glycero-3-phosphocholine + H2O = 2-(5Z,8Z,11Z,14Z)-eicosatetraenoyl-sn-glycero-3-phosphocholine + hexadecanoate + H(+). The enzyme catalyses 1-octadecanoyl-2-(9Z-octadecenoyl)-sn-glycero-3-phosphocholine + H2O = 2-(9Z-octadecenoyl)-sn-glycero-3-phosphocholine + octadecanoate + H(+). It carries out the reaction 1-hexadecanoyl-2-(4Z,7Z,10Z,13Z,16Z,19Z-docosahexaenoyl)-sn-glycero-3-phosphocholine + H2O = 2-(4Z,7Z,10Z,13Z,16Z,19Z-docosahexaenoyl)-sn-glycero-3-phosphocholine + hexadecanoate + H(+). The catalysed reaction is 1-O-(1Z)-hexadecenyl-2 (5Z,8Z,11Z,14Z)-eicosatetraenoyl-sn-glycero-3-phosphocholine + H2O = 1-(1Z-hexadecenyl)-sn-glycero-3-phosphocholine + (5Z,8Z,11Z,14Z)-eicosatetraenoate + H(+). It catalyses the reaction 1-O-(1Z-hexadecenyl)-2-(9Z-octadecenoyl)-sn-glycero-3-phosphocholine + H2O = 1-(1Z-hexadecenyl)-sn-glycero-3-phosphocholine + (9Z)-octadecenoate + H(+). The enzyme catalyses 1-hexadecanoyl-sn-glycero-3-phosphocholine + H2O = sn-glycerol 3-phosphocholine + hexadecanoate + H(+). It carries out the reaction 1',3'-bis-[1,2-di-(9Z,12Z-octadecadienoyl)-sn-glycero-3-phospho]-glycerol + H2O = 1'-[1,2-di-(9Z,12Z-octadecadienoyl)-sn-glycero-3-phospho]-3'-[1-(9Z,12Z-octadecadienoyl)-sn-glycero-3-phospho]-glycerol + (9Z,12Z)-octadecadienoate + H(+). The catalysed reaction is 1'-[1-acyl-2-(9-hydroxy-(10E,12Z)-octadecadienoyl)-sn-glycero-3-phospho]-3'-[1,2-diacyl-sn-glycero-3-phospho]-glycerol + H2O = 9-hydroxy-(10E,12Z)-octadecadienoate + 1'-[1,2-diacyl-sn-glycero-3-phospho],3'-[1-acyl-sn-glycero-3-phospho]-glycerol + H(+). The protein operates within phospholipid metabolism. With respect to regulation, calcium-independent phospholipase. Inhibited by (E)-6-bromomethylene-3-1-naphthalenyl-2H-tetrahydropyran-2-one (BEL). The activity toward 1-hexadecanoyl-2-(5Z,8Z,11Z,14Z-eicosatetraenoyl)-sn-glycero-3-phosphocholine is stimulated by cardiolipin. Functionally, calcium-independent and membrane-bound phospholipase, that catalyzes the esterolytic cleavage of fatty acids from glycerophospholipids to yield free fatty acids and lysophospholipids, hence regulating membrane physical properties and the release of lipid second messengers and growth factors. Hydrolyzes phosphatidylethanolamine, phosphatidylcholine and probably phosphatidylinositol with a possible preference for the former. Also has a broad substrate specificity in terms of fatty acid moieties, hydrolyzing saturated and mono-unsaturated fatty acids at nearly equal rates from either the sn-1 or sn-2 position in diacyl phosphatidylcholine. However, has a weak activity toward polyunsaturated fatty acids at the sn-2 position, and thereby favors the production of 2-arachidonoyl lysophosphatidylcholine, a key branch point metabolite in eicosanoid signaling. On the other hand, can produce arachidonic acid from the sn-1 position of diacyl phospholipid and from the sn-2 position of arachidonate-containing plasmalogen substrates. Therefore, plays an important role in the mobilization of arachidonic acid in response to cellular stimuli and the generation of lipid second messengers. Can also hydrolyze lysophosphatidylcholine. In the mitochondrial compartment, catalyzes the hydrolysis and release of oxidized aliphatic chains from cardiolipin and integrates mitochondrial bioenergetics and signaling. It is essential for maintaining efficient bioenergetic mitochondrial function through tailoring mitochondrial membrane lipid metabolism and composition. The sequence is that of Calcium-independent phospholipase A2-gamma from Homo sapiens (Human).